The sequence spans 536 residues: CTP synthase (536 aa).

Residues 1 to 268 (MSFKSIFLTG…VDFLLSKFGF (268 aa)) are amidoligase domain. Serine 14 is a binding site for CTP. Serine 14 lines the UTP pocket. Residue 15 to 20 (SLGKGL) coordinates ATP. Tyrosine 55 contributes to the L-glutamine binding site. Aspartate 72 contributes to the ATP binding site. 2 residues coordinate Mg(2+): aspartate 72 and glutamate 142. CTP-binding positions include 149–151 (DIE), 188–193 (KTKPTQ), and lysine 224. UTP-binding positions include 188-193 (KTKPTQ) and lysine 224. Residues 294–532 (RIGLVGKYLE…LSAALDYSLE (239 aa)) form the Glutamine amidotransferase type-1 domain. Glycine 353 is an L-glutamine binding site. Cysteine 380 acts as the Nucleophile; for glutamine hydrolysis in catalysis. L-glutamine contacts are provided by residues 381 to 384 (LGMQ), glutamate 404, and arginine 460. Active-site residues include histidine 505 and glutamate 507.

This sequence belongs to the CTP synthase family. In terms of assembly, homotetramer.

It catalyses the reaction UTP + L-glutamine + ATP + H2O = CTP + L-glutamate + ADP + phosphate + 2 H(+). The catalysed reaction is L-glutamine + H2O = L-glutamate + NH4(+). It carries out the reaction UTP + NH4(+) + ATP = CTP + ADP + phosphate + 2 H(+). The protein operates within pyrimidine metabolism; CTP biosynthesis via de novo pathway; CTP from UDP: step 2/2. Allosterically activated by GTP, when glutamine is the substrate; GTP has no effect on the reaction when ammonia is the substrate. The allosteric effector GTP functions by stabilizing the protein conformation that binds the tetrahedral intermediate(s) formed during glutamine hydrolysis. Inhibited by the product CTP, via allosteric rather than competitive inhibition. Functionally, catalyzes the ATP-dependent amination of UTP to CTP with either L-glutamine or ammonia as the source of nitrogen. Regulates intracellular CTP levels through interactions with the four ribonucleotide triphosphates. In Chlamydia muridarum (strain MoPn / Nigg), this protein is CTP synthase.